We begin with the raw amino-acid sequence, 256 residues long: Astacin-like metalloprotease toxin 2 (256 aa).

The signal sequence occupies residues M1–A24. The propeptide occupies T25–R52. In terms of domain architecture, Peptidase M12A spans N53–P250. Intrachain disulfides connect C94-C249 and C117-C136. Position 144 (H144) interacts with Zn(2+). E145 is an active-site residue. Positions 148 and 154 each coordinate Zn(2+).

In terms of assembly, monomer. It depends on Zn(2+) as a cofactor. Expressed by the venom gland.

The protein localises to the secreted. Its activity is regulated as follows. Inhibited by 1,10-phenanthroline. Functionally, zinc metalloprotease. Provoques deadhesion of endothelial cells from cell cultures, and also degradation of fibronectin, fibrinogen and gelatin in vitro. Its role in the venom is not fully understood but it might act as a spreading factor that facilitates diffusion of other venom toxins. Alternatively, it might be involved in the proteolytic processing of other venom toxins or it might play a role in extra-oral digestion of prey. This is Astacin-like metalloprotease toxin 2 from Loxosceles intermedia (Brown spider).